The primary structure comprises 764 residues: uncharacterized protein (764 aa).

This is an uncharacterized protein from Acanthamoeba polyphaga (Amoeba).